A 320-amino-acid polypeptide reads, in one-letter code: ATP-dependent 6-phosphofructokinase (320 aa).

Glycine 12 is a binding site for ATP. Residue 22 to 26 coordinates ADP; it reads RGVVR. ATP-binding positions include 73-74 and 103-106; these read RF and GDGS. A Mg(2+)-binding site is contributed by aspartate 104. 126–128 provides a ligand contact to substrate; that stretch reads TID. Aspartate 128 serves as the catalytic Proton acceptor. Arginine 155 provides a ligand contact to ADP. Substrate is bound by residues arginine 163 and 170 to 172; that span reads MGR. Residues 186-188, lysine 212, and 214-216 contribute to the ADP site; these read GCE and KKH. Substrate is bound by residues glutamate 223, arginine 244, and 250–253; that span reads HIQR.

This sequence belongs to the phosphofructokinase type A (PFKA) family. ATP-dependent PFK group I subfamily. Prokaryotic clade 'B1' sub-subfamily. In terms of assembly, homotetramer. Requires Mg(2+) as cofactor.

It localises to the cytoplasm. The catalysed reaction is beta-D-fructose 6-phosphate + ATP = beta-D-fructose 1,6-bisphosphate + ADP + H(+). The protein operates within carbohydrate degradation; glycolysis; D-glyceraldehyde 3-phosphate and glycerone phosphate from D-glucose: step 3/4. Allosterically activated by ADP and other diphosphonucleosides, and allosterically inhibited by phosphoenolpyruvate. Functionally, catalyzes the phosphorylation of D-fructose 6-phosphate to fructose 1,6-bisphosphate by ATP, the first committing step of glycolysis. This chain is ATP-dependent 6-phosphofructokinase, found in Aliivibrio salmonicida (strain LFI1238) (Vibrio salmonicida (strain LFI1238)).